A 126-amino-acid polypeptide reads, in one-letter code: Holo-[acyl-carrier-protein] synthase (126 aa).

Residues Asp-8 and Glu-57 each contribute to the Mg(2+) site.

The protein belongs to the P-Pant transferase superfamily. AcpS family. Mg(2+) serves as cofactor.

The protein localises to the cytoplasm. It carries out the reaction apo-[ACP] + CoA = holo-[ACP] + adenosine 3',5'-bisphosphate + H(+). Functionally, transfers the 4'-phosphopantetheine moiety from coenzyme A to a Ser of acyl-carrier-protein. The polypeptide is Holo-[acyl-carrier-protein] synthase (Vibrio cholerae serotype O1 (strain ATCC 39315 / El Tor Inaba N16961)).